The sequence spans 117 residues: Ig heavy chain V region 23 (117 aa).

Residues 1–19 form the signal peptide; it reads MGWSCIILFLVAAANGVHS. Residues 20–49 form a framework-1 region; it reads QVQLQQPGTELVKPGASVKLSCKASGYTFT. The cysteines at positions 41 and 115 are disulfide-linked. Positions 50-54 are complementarity-determining-1; the sequence is SYWMH. The interval 55–68 is framework-2; that stretch reads WVKQRPGQGLEWIG. The interval 69–85 is complementarity-determining-2; sequence NINPGNGGTNYNEKFKS. Residues 86–117 form a framework-3 region; it reads KVTLTVDKSSSTAYTQLSSLTSEDSAVYYCAR.

In Mus musculus (Mouse), this protein is Ig heavy chain V region 23.